The following is a 296-amino-acid chain: Uracil phosphoribosyltransferase, chloroplastic (296 aa).

The N-terminal 61 residues, 1-61 (MACSIGNAFR…SSSLSRRTIR (61 aa)), are a transit peptide targeting the chloroplast. At Ala-2 the chain carries N-acetylalanine. GTP is bound at residue 148–151 (REPI). 5-phospho-alpha-D-ribose 1-diphosphate is bound by residues Arg-158, Arg-183, Asp-211, 216–219 (TGGT), and Asp-282. Residue 281–283 (GDA) coordinates uracil.

Belongs to the UPRTase family. The cofactor is Mg(2+).

It is found in the plastid. The protein localises to the chloroplast. It catalyses the reaction UMP + diphosphate = 5-phospho-alpha-D-ribose 1-diphosphate + uracil. The protein operates within pyrimidine metabolism; UMP biosynthesis via salvage pathway; UMP from uracil: step 1/1. With respect to regulation, allosterically activated by GTP. In terms of biological role, uracil phosphoribosyltransferase (UPRT) that catalyzes the conversion of uracil and 5-phospho-alpha-D-ribose 1-diphosphate (PRPP) to UMP and diphosphate. Is probably the only functional UPRT, since the dual-domain proteins of the UKL family seem to lack this activity. The sequence is that of Uracil phosphoribosyltransferase, chloroplastic (UPP) from Arabidopsis thaliana (Mouse-ear cress).